We begin with the raw amino-acid sequence, 745 residues long: Protein PHOX1 (745 aa).

The span at 1–10 (MGKPTGKKKN) shows a compositional bias: basic residues. The interval 1–37 (MGKPTGKKKNNNYTEMPPTESSTTGGGKTGKSFDRSA) is disordered. TPR repeat units lie at residues 52-85 (ALELKEEGNKLFQKRDYEGAMFRYDKAVKLLPRD), 90-125 (AYLRTSMASCYMQMGLGEYPNAINECNLALEASPRF), and 126-159 (SKALLKRARCYEALNKLDFAFRDSRVVLNMEPEN). Residues 280–359 (TRTVKLVHGD…GSFRLYIAEV (80 aa)) form the PB1 domain. 4 TPR repeats span residues 406–441 (EHWIFQFAQLFKNHVGFDSDSYLELHNLGMKLYTEA), 443–472 (EDIVTGEDAQELFDIAADKFQEMAALAMFN), 494–528 (ETILEKVEAGFEWAKNEYNKAAEKYEGAVKIKSDF), and 553–586 (GEVDIESDASQDVLKLYNKAEESMEKGMQIWEEM).

Interacts with myosin XI-1 and XI-K.

It localises to the cytoplasmic vesicle membrane. Its function is as follows. Carboxylate clamp type tetratricopeptide repeat protein that may act as a potential Hsp90/Hsp70 co-chaperone. Contributes to polar growth of root hairs. The chain is Protein PHOX1 from Arabidopsis thaliana (Mouse-ear cress).